Reading from the N-terminus, the 273-residue chain is L-fucose dehydrogenase (273 aa).

Residues Arg19, Ile21, Asp40, Lys41, Asp62, Val63, Asn89, Tyr154, Lys158, Ile187, Thr189, and Leu191 each contribute to the NAD(+) site. Residue Tyr154 is the Proton acceptor of the active site.

The protein belongs to the short-chain dehydrogenases/reductases (SDR) family. As to quaternary structure, homotetramer.

It is found in the cytoplasm. The catalysed reaction is L-fucose + NAD(+) = L-fucono-1,5-lactone + NADH + H(+). It catalyses the reaction D-arabinose + NAD(+) = D-arabinono-1,5-lactone + NADH + H(+). The enzyme catalyses L-galactose + NAD(+) = L-galactono-1,5-lactone + NADH + H(+). Its pathway is carbohydrate degradation; L-fucose degradation. In terms of biological role, catalyzes the NAD(+)-dependent oxidation of L-fucose, yielding L-fucono-1,5-lactone, which rapidly converts spontaneously to L-fucone-1,4-lactone. Can also act on D-arabinose and L-galactose, with lower catalytic efficiency. Does not use NADPH. May be the initial enzyme of the putative L-fucose degradation pathway in mammals. The protein is L-fucose dehydrogenase of Mus musculus (Mouse).